The chain runs to 588 residues: Arginine--tRNA ligase (588 aa).

The 'HIGH' region signature appears at 129-139 (PNIAKEMHVGH).

Belongs to the class-I aminoacyl-tRNA synthetase family. Monomer.

It is found in the cytoplasm. The enzyme catalyses tRNA(Arg) + L-arginine + ATP = L-arginyl-tRNA(Arg) + AMP + diphosphate. The sequence is that of Arginine--tRNA ligase from Frankia casuarinae (strain DSM 45818 / CECT 9043 / HFP020203 / CcI3).